The following is a 351-amino-acid chain: Foldase protein PrsA 1 (351 aa).

The signal sequence occupies residues 1–22 (MKNSNKLIASVVTLASVMALAA). Cysteine 23 is lipidated: N-palmitoyl cysteine. Residue cysteine 23 is the site of S-diacylglycerol cysteine attachment. Positions 145-240 (TPTMAVEMIT…KKFYIVKVTK (96 aa)) constitute a PpiC domain. Low complexity-rich tracts occupy residues 303–317 (KTKA…SESS) and 326–351 (ESEQ…PAAQ). Positions 303-351 (KTKAASESSTTSESSKAAEENPSESEQTQTSSAEEPTETEAQTQEPAAQ) are disordered.

This sequence belongs to the PrsA family.

The protein localises to the cell membrane. The enzyme catalyses [protein]-peptidylproline (omega=180) = [protein]-peptidylproline (omega=0). In terms of biological role, plays a major role in protein secretion by helping the post-translocational extracellular folding of several secreted proteins. This is Foldase protein PrsA 1 (prsA1) from Streptococcus pyogenes serotype M18 (strain MGAS8232).